Here is a 69-residue protein sequence, read N- to C-terminus: Bowman-Birk type proteinase inhibitor A2 (69 aa).

4 cysteine pairs are disulfide-bonded: Cys-12-Cys-31, Cys-18-Cys-29, Cys-38-Cys-45, and Cys-42-Cys-59.

Belongs to the Bowman-Birk serine protease inhibitor family. In terms of tissue distribution, expressed in bulb (at protein level).

Functionally, serine protease inhibitor. The polypeptide is Bowman-Birk type proteinase inhibitor A2 (Hyacinthus orientalis (Common hyacinth)).